Here is a 317-residue protein sequence, read N- to C-terminus: Retinol dehydrogenase 7 (317 aa).

Position 33 to 57 (33 to 57 (FITGCDSGFGNLLARQLDRRGMRVL)) interacts with NADP(+). Ser-164 contributes to the substrate binding site. Residue Tyr-176 is the Proton acceptor of the active site.

This sequence belongs to the short-chain dehydrogenases/reductases (SDR) family.

It is found in the microsome. The protein resides in the endoplasmic reticulum. It catalyses the reaction all-trans-retinol--[retinol-binding protein] + NAD(+) = all-trans-retinal--[retinol-binding protein] + NADH + H(+). The protein operates within cofactor metabolism; retinol metabolism. Its function is as follows. Acts on retinol bound on cellular retinol-binding protein (CRBP). This Rattus norvegicus (Rat) protein is Retinol dehydrogenase 7.